A 38-amino-acid polypeptide reads, in one-letter code: Beta-galactosidase (38 aa).

Belongs to the glycosyl hydrolase 35 family. Heterodimer of a large and a small subunit. Post-translationally, the small subunit is N-glycosylated.

The enzyme catalyses Hydrolysis of terminal non-reducing beta-D-galactose residues in beta-D-galactosides.. Its function is as follows. Involved in cell wall degradation. Degrades polysaccharides containing beta-(1--&gt;4)-linked galactans, acting as an exo-(1--&gt;4)-beta-D-galactanase. The protein is Beta-galactosidase of Hordeum vulgare (Barley).